A 344-amino-acid chain; its full sequence is Ubiquitin-associated domain-containing protein 2 (344 aa).

The first 35 residues, methionine 1–proline 35, serve as a signal peptide directing secretion. The Extracellular segment spans residues histidine 36–lysine 91. The chain crosses the membrane as a helical span at residues phenylalanine 92–glutamate 112. Topologically, residues alanine 113–asparagine 125 are cytoplasmic. Residues leucine 126–proline 146 traverse the membrane as a helical segment. Residues arginine 147–threonine 163 are Extracellular-facing. A glycan (N-linked (GlcNAc...) asparagine) is linked at asparagine 161. Residues leucine 164–isoleucine 184 traverse the membrane as a helical segment. Residues serine 185 to histidine 344 lie on the Cytoplasmic side of the membrane. The region spanning glutamate 304–histidine 344 is the UBA domain.

In terms of assembly, interacts with FAF2. Interacts with LMBR1L. Interacts with AMFR and VCP.

The protein localises to the endoplasmic reticulum membrane. Restricts trafficking of FAF2 from the endoplasmic reticulum to lipid droplets. In association with LMBR1L and E3 ubiquitin-protein ligase AMFR, negatively regulates the canonical Wnt signaling pathway in the lymphocytes by promoting the ubiquitin-mediated degradation of CTNNB1 and Wnt receptors FZD6 and LRP6. This Homo sapiens (Human) protein is Ubiquitin-associated domain-containing protein 2 (UBAC2).